A 319-amino-acid polypeptide reads, in one-letter code: Malate dehydrogenase (319 aa).

Residues 10–15 (GAGNIG) and aspartate 34 contribute to the NAD(+) site. The substrate site is built by arginine 83 and arginine 89. Residues asparagine 96 and 119–121 (ITN) contribute to the NAD(+) site. Substrate is bound by residues asparagine 121 and arginine 152. The Proton acceptor role is filled by histidine 176.

It belongs to the LDH/MDH superfamily. MDH type 3 family.

The enzyme catalyses (S)-malate + NAD(+) = oxaloacetate + NADH + H(+). Functionally, catalyzes the reversible oxidation of malate to oxaloacetate. This Francisella novicida protein is Malate dehydrogenase.